Reading from the N-terminus, the 272-residue chain is 3-methyl-2-oxobutanoate hydroxymethyltransferase (272 aa).

Residues aspartate 54 and aspartate 93 each coordinate Mg(2+). 3-methyl-2-oxobutanoate-binding positions include 54–55 (DS), aspartate 93, and lysine 121. Glutamate 123 provides a ligand contact to Mg(2+). Catalysis depends on glutamate 190, which acts as the Proton acceptor.

This sequence belongs to the PanB family. Homodecamer; pentamer of dimers. The cofactor is Mg(2+).

The protein resides in the cytoplasm. The catalysed reaction is 3-methyl-2-oxobutanoate + (6R)-5,10-methylene-5,6,7,8-tetrahydrofolate + H2O = 2-dehydropantoate + (6S)-5,6,7,8-tetrahydrofolate. It participates in cofactor biosynthesis; (R)-pantothenate biosynthesis; (R)-pantoate from 3-methyl-2-oxobutanoate: step 1/2. Catalyzes the reversible reaction in which hydroxymethyl group from 5,10-methylenetetrahydrofolate is transferred onto alpha-ketoisovalerate to form ketopantoate. This Janthinobacterium sp. (strain Marseille) (Minibacterium massiliensis) protein is 3-methyl-2-oxobutanoate hydroxymethyltransferase.